A 103-amino-acid polypeptide reads, in one-letter code: Carboxysome shell protein CcmK3 (103 aa).

A BMC domain is found at 4 to 91 (AVGVIQTLGF…PPENVLAVLP (88 aa)).

The protein belongs to the bacterial microcompartments protein family. CcmK subfamily. As to quaternary structure, forms mixed heterohexamers with CcmK4, probably with 1:5 CcmK3:CcmK4 stoichiometry. Only very weak interactions with CcmK1 and CcmK2 were seen. Bulky residues in the pore region probably preclude the formation of homohexamers by this subunit.

The protein resides in the carboxysome. Functionally, a probably minor shell protein component of the carboxysome, a polyhedral inclusion where RuBisCO (ribulose bisphosphate carboxylase, rbcL-rbcS) is sequestered. This subunit probably does not form homohexamers. The sequence is that of Carboxysome shell protein CcmK3 from Synechocystis sp. (strain ATCC 27184 / PCC 6803 / Kazusa).